Consider the following 382-residue polypeptide: Ribosomal RNA large subunit methyltransferase F (382 aa).

Disordered regions lie at residues 1–53 (MTKP…LHRD) and 269–288 (NRAS…KSQL). A compositionally biased stretch (basic residues) spans 8-24 (ASRKPVTKSGRNSKRSR). A compositionally biased stretch (basic and acidic residues) spans 269–286 (NRASKGHKLEPKAPKDKS).

This sequence belongs to the methyltransferase superfamily. METTL16/RlmF family.

The protein resides in the cytoplasm. The catalysed reaction is adenosine(1618) in 23S rRNA + S-adenosyl-L-methionine = N(6)-methyladenosine(1618) in 23S rRNA + S-adenosyl-L-homocysteine + H(+). Functionally, specifically methylates the adenine in position 1618 of 23S rRNA. This Shewanella woodyi (strain ATCC 51908 / MS32) protein is Ribosomal RNA large subunit methyltransferase F.